Reading from the N-terminus, the 1057-residue chain is Probable E3 ubiquitin-protein ligase HERC4 (1057 aa).

RCC1 repeat units follow at residues 1–51, 52–101, 102–154, 156–207, 208–259, 261–311, and 313–368; these read MLCW…FVLD, DGTV…ALND, KGQV…ALSK, SEVF…VLTL, SGAI…ALTK, GGVF…AFVP, and SGRI…KRIF. The region spanning 730–1057 is the HECT domain; it reads KNIDYKKPLK…IDHNEGFSLI (328 aa). Residue Cys-1025 is the Glycyl thioester intermediate of the active site.

In terms of tissue distribution, expressed in brain and testis and detected in heart and placenta.

The protein resides in the cytoplasm. Its subcellular location is the cytosol. It catalyses the reaction S-ubiquitinyl-[E2 ubiquitin-conjugating enzyme]-L-cysteine + [acceptor protein]-L-lysine = [E2 ubiquitin-conjugating enzyme]-L-cysteine + N(6)-ubiquitinyl-[acceptor protein]-L-lysine.. It functions in the pathway protein modification; protein ubiquitination. Its function is as follows. Probable E3 ubiquitin-protein ligase involved in either protein trafficking or in the distribution of cellular structures. Required for spermatozoon maturation and fertility, and for the removal of the cytoplasmic droplet of the spermatozoon. E3 ubiquitin-protein ligases accept ubiquitin from an E2 ubiquitin-conjugating enzyme in the form of a thioester and then directly transfer it to targeted substrates. The protein is Probable E3 ubiquitin-protein ligase HERC4 (HERC4) of Homo sapiens (Human).